The primary structure comprises 155 residues: Ribosome maturation factor RimP (155 aa).

Belongs to the RimP family.

It localises to the cytoplasm. Its function is as follows. Required for maturation of 30S ribosomal subunits. The protein is Ribosome maturation factor RimP of Synechococcus sp. (strain WH7803).